An 855-amino-acid chain; its full sequence is Beclin-1-like protein B (855 aa).

Disordered regions lie at residues 92 to 212 (FGKR…GSLS), 236 to 271 (LVADINNNNNSVNKDNNTTISSSTVTTSNSISESNN), 294 to 380 (ATIP…QKPR), and 407 to 475 (VDGG…QQQP). Low complexity-rich tracts occupy residues 99–123 (TQSNSTTPTTPATPTATPTSSSLSL) and 131–143 (QQQQQQQQQQQQT). Residues 144 to 156 (FNDQSKLTATTPT) are compositionally biased toward polar residues. The segment covering 177–200 (HSNNSSNGSDHGGNVNTTGVSPSS) has biased composition (low complexity). Residues 294–348 (ATIPTTTTTSTPTTPSTVGGTTPSPPSSSSSSSSSSSVITSPISRISPSNITSPS) are compositionally biased toward low complexity. Polar residues-rich tracts occupy residues 368-377 (LNISQVSSPQ) and 413-445 (SGTESTSMTNHHSSFLNQSTLPLGSSPVQTTPP). Over residues 446–474 (LLSNSMNNSTNNLQSLQQQQQQQQQQQQQ) the composition is skewed to low complexity. Residues 538–595 (EKGKTEEDLEELGKEMTLLCEEEEQLRLMIENTHQERKEVEQLTLQLQDRIATLKSLE) are a coiled coil. Residues 826 to 855 (LNNNQNNNNINNNNNNNINNNNNNNVNKRN) are disordered.

The protein belongs to the beclin family.

The protein localises to the endosome membrane. Its function is as follows. Involved in autophagy. May be required to recruit the atg8-phosphatidylinositol conjugate and the atg12-atg5 conjugate to the pre-autophagosomal structure. This Dictyostelium discoideum (Social amoeba) protein is Beclin-1-like protein B (atg6B).